A 274-amino-acid chain; its full sequence is NADPH-dependent 7-cyano-7-deazaguanine reductase (274 aa).

Residue 80 to 82 (VES) coordinates substrate. NADPH is bound at residue 82–83 (SK). C181 functions as the Thioimide intermediate in the catalytic mechanism. D188 acts as the Proton donor in catalysis. 220-221 (HE) lines the substrate pocket. 249–250 (RG) provides a ligand contact to NADPH.

It belongs to the GTP cyclohydrolase I family. QueF type 2 subfamily. As to quaternary structure, homodimer.

The protein localises to the cytoplasm. It carries out the reaction 7-aminomethyl-7-carbaguanine + 2 NADP(+) = 7-cyano-7-deazaguanine + 2 NADPH + 3 H(+). Its pathway is tRNA modification; tRNA-queuosine biosynthesis. Its function is as follows. Catalyzes the NADPH-dependent reduction of 7-cyano-7-deazaguanine (preQ0) to 7-aminomethyl-7-deazaguanine (preQ1). The protein is NADPH-dependent 7-cyano-7-deazaguanine reductase of Paraburkholderia phytofirmans (strain DSM 17436 / LMG 22146 / PsJN) (Burkholderia phytofirmans).